We begin with the raw amino-acid sequence, 118 residues long: Beta-2-microglobulin (118 aa).

Residues 1–20 (MARFVALVLLGLLSLSGLDA) form the signal peptide. In terms of domain architecture, Ig-like C1-type spans 25 to 112 (PKIQVYSRHP…HVTLEQPRIV (88 aa)). Cys-45 and Cys-99 are oxidised to a cystine.

Belongs to the beta-2-microglobulin family. In terms of assembly, heterodimer of an alpha chain and a beta chain. Beta-2-microglobulin is the beta-chain of major histocompatibility complex class I molecules. Forms a heterotrimer with MR1 and a metabolite antigen.

The protein localises to the secreted. In terms of biological role, component of the class I major histocompatibility complex (MHC). Involved in the presentation of peptide antigens to the immune system. The sequence is that of Beta-2-microglobulin (B2M) from Bos taurus (Bovine).